Consider the following 1238-residue polypeptide: DNA-directed RNA polymerase subunit beta (1238 aa).

Belongs to the RNA polymerase beta chain family. As to quaternary structure, the RNAP catalytic core consists of 2 alpha, 1 beta, 1 beta' and 1 omega subunit. When a sigma factor is associated with the core the holoenzyme is formed, which can initiate transcription.

It catalyses the reaction RNA(n) + a ribonucleoside 5'-triphosphate = RNA(n+1) + diphosphate. Functionally, DNA-dependent RNA polymerase catalyzes the transcription of DNA into RNA using the four ribonucleoside triphosphates as substrates. The polypeptide is DNA-directed RNA polymerase subunit beta (Clostridioides difficile (strain 630) (Peptoclostridium difficile)).